An 871-amino-acid polypeptide reads, in one-letter code: Protein translocase subunit SecA (871 aa).

ATP contacts are provided by residues glutamine 80, 98–102 (GEGKT), and aspartate 537.

This sequence belongs to the SecA family. Monomer and homodimer. Part of the essential Sec protein translocation apparatus which comprises SecA, SecYEG and auxiliary proteins SecDF. Other proteins may also be involved. A single SecA monomer interacts with SecY in the channel.

It localises to the cell inner membrane. Its subcellular location is the cytoplasm. It carries out the reaction ATP + H2O + cellular proteinSide 1 = ADP + phosphate + cellular proteinSide 2.. Part of the Sec protein translocase complex. Interacts with the SecYEG preprotein conducting channel. Has a central role in coupling the hydrolysis of ATP to the transfer of proteins into and across the cell membrane, serving as an ATP-driven molecular motor driving the stepwise translocation of polypeptide chains across the membrane. The polypeptide is Protein translocase subunit SecA (Thermotoga maritima (strain ATCC 43589 / DSM 3109 / JCM 10099 / NBRC 100826 / MSB8)).